The following is a 528-amino-acid chain: Calcium-dependent protein kinase 4 (528 aa).

Polar residues predominate over residues 1–16 (MGQEMSTQSDMQNENQ). A disordered region spans residues 1 to 36 (MGQEMSTQSDMQNENQKGNKRNLKGSQGKNGLKERS). Glycine 2 is lipidated: N-myristoyl glycine. One can recognise a Protein kinase domain in the interval 70–328 (YKGIKILGKG…ARDALEHEWI (259 aa)). ATP-binding positions include 76–84 (LGKGSFGEV) and lysine 99. Aspartate 193 acts as the Proton acceptor in catalysis. Positions 350-358 (NIKQFQSTQ) match the J domain autoinhibitory motif motif. A j domain region spans residues 350-386 (NIKQFQSTQKLAQAALLYMGSKLTTIDETKELTKIFK). The J domain EF-hand interaction motif signature appears at 359–368 (KLAQAALLYM). 4 EF-hand domains span residues 376 to 411 (DETKELTKIFKKMDKNGDGQLDRNELIIGYKELLKL), 423 to 458 (AIEVEVDQILSSIDLDQNGYIEYSEFLTVAIDRKLL), 459 to 494 (LSTERLEKAFKLFDKDGSGKISANELAQLFGLGDVS), and 498 to 528 (WKTVLKEVDQNNDGEIDFKEFRDMLIKLCNY). Ca(2+) contacts are provided by aspartate 389, asparagine 391, aspartate 393, glutamine 395, glutamate 400, aspartate 436, aspartate 438, asparagine 440, tyrosine 442, glutamate 447, aspartate 472, aspartate 474, serine 476, lysine 478, glutamate 483, aspartate 506, asparagine 508, aspartate 510, glutamate 512, and glutamate 517.

This sequence belongs to the protein kinase superfamily. Ser/Thr protein kinase family. CDPK subfamily. May interact with the pre-replication MCM complex prior male gametogenesis activation. Mg(2+) serves as cofactor. In terms of processing, myristoylated; myristoylation may target it to different subcellular compartments. During male gametogenesis, myristoylation is required to initiate DNA replication but not for mitotic spindle assembly or axoneme activation. Not palmitoylated. Post-translationally, may be autophosphorylated on Thr-234 in vitro.

The protein resides in the cytoplasm. It is found in the membrane. The protein localises to the chromosome. The catalysed reaction is L-seryl-[protein] + ATP = O-phospho-L-seryl-[protein] + ADP + H(+). It carries out the reaction L-threonyl-[protein] + ATP = O-phospho-L-threonyl-[protein] + ADP + H(+). With respect to regulation, activated by calcium. Upon calcium binding to the EF-hand domains, the C-terminus of the junction domain (J domain) undergoes a conformational change which results in the dissociation of the pseudo-substrate inhibitory motif from the catalytic domain. This, in turn, may facilitate the autophosphorylation of the activation loop at Thr-234, which leads to the kinase activation. Intracellular calcium increase is triggered by xanthurenic acid (XA), a small mosquito molecule that induces the differentiation of specialized transmission stages, the gametocytes, into male and female gametes. Activated by a decrease in temperature (20 degrees Celsius) and an increase in pH (7.6) occurring when the parasite is ingested by in the mosquito. Calcium-dependent protein kinase which acts as a sensor and effector of intracellular Ca(2+) levels probably in part downstream of cGMP-activated PKG kinase. Plays a central role in the host erythrocytes and hepatocytes infection cycles, sexual reproduction and mosquito transmission of the parasite. During the liver stage, involved in sporozoite motility and thus in sporozoite invasion of host hepatocytes, probably together with CDPK1 and CDPK5. Involved in merosome egress from host hepatocytes, probably together with CDPK5. During the asexual blood stage, involved in merozoite invasion of host erythrocytes and motility by stabilizing the inner membrane complex, a structure below the plasma membrane which acts as an anchor for the glidosome, an acto-myosin motor. Required for cell cycle progression in the male gametocyte. During male gametogenesis in the mosquito gut, required to initiate the first round of DNA replication, probably by facilitating the assembly of the pre-replicative MCM complex, to assemble the first mitotic spindle and, at the end of gametogenesis, to initiate axoneme motility, cytokinesis and subsequent exflagellation. For each of these steps, may phosphorylate SOC1, SOC2 and SOC3, respectively. Together with CDPK1, regulates ookinete gliding in the mosquito host midgut. In terms of biological role, during male gametogenesis in the mosquito gut, required to initiate the first round of DNA replication, probably by facilitating the assembly of the pre-replicative MCM complex, and to assemble the first mitotic spindle. Functionally, at the end of male gametogenesis in the mosquito gut, required to initiate axoneme motility, cytokinesis and subsequent exflagellation. In Plasmodium berghei (strain Anka), this protein is Calcium-dependent protein kinase 4.